Here is a 214-residue protein sequence, read N- to C-terminus: Stringent starvation protein A homolog (214 aa).

In terms of domain architecture, GST N-terminal spans 9-87; that stretch reads SVMSLFSDKN…YLDERFPHPP (79 aa). A GST C-terminal domain is found at 92-209; that stretch reads YPVLRGKSRL…SIGGSAPKHL (118 aa).

The protein belongs to the GST superfamily. HSP26 family.

Functionally, forms an equimolar complex with the RNA polymerase holoenzyme (RNAP) but not with the core enzyme. In Haemophilus ducreyi (strain 35000HP / ATCC 700724), this protein is Stringent starvation protein A homolog (sspA).